A 208-amino-acid chain; its full sequence is 3-demethoxyubiquinol 3-hydroxylase (208 aa).

Fe cation is bound by residues Glu57, Glu87, His90, Glu139, Glu171, and His174.

Belongs to the COQ7 family. Fe cation is required as a cofactor.

It localises to the cell membrane. The enzyme catalyses a 5-methoxy-2-methyl-3-(all-trans-polyprenyl)benzene-1,4-diol + AH2 + O2 = a 3-demethylubiquinol + A + H2O. The protein operates within cofactor biosynthesis; ubiquinone biosynthesis. Catalyzes the hydroxylation of 2-nonaprenyl-3-methyl-6-methoxy-1,4-benzoquinol during ubiquinone biosynthesis. The polypeptide is 3-demethoxyubiquinol 3-hydroxylase (Burkholderia ambifaria (strain MC40-6)).